We begin with the raw amino-acid sequence, 327 residues long: Undecaprenyl-phosphate 4-deoxy-4-formamido-L-arabinose transferase (327 aa).

A run of 2 helical transmembrane segments spans residues 236 to 256 (LSVF…LLVV) and 270 to 290 (VFML…AMGL).

This sequence belongs to the glycosyltransferase 2 family.

Its subcellular location is the cell inner membrane. It catalyses the reaction UDP-4-deoxy-4-formamido-beta-L-arabinose + di-trans,octa-cis-undecaprenyl phosphate = 4-deoxy-4-formamido-alpha-L-arabinopyranosyl di-trans,octa-cis-undecaprenyl phosphate + UDP. It functions in the pathway glycolipid biosynthesis; 4-amino-4-deoxy-alpha-L-arabinose undecaprenyl phosphate biosynthesis; 4-amino-4-deoxy-alpha-L-arabinose undecaprenyl phosphate from UDP-4-deoxy-4-formamido-beta-L-arabinose and undecaprenyl phosphate: step 1/2. The protein operates within bacterial outer membrane biogenesis; lipopolysaccharide biosynthesis. In terms of biological role, catalyzes the transfer of 4-deoxy-4-formamido-L-arabinose from UDP to undecaprenyl phosphate. The modified arabinose is attached to lipid A and is required for resistance to polymyxin and cationic antimicrobial peptides. This Enterobacter sp. (strain 638) protein is Undecaprenyl-phosphate 4-deoxy-4-formamido-L-arabinose transferase.